The sequence spans 538 residues: Ribosome-associated complex subunit SSZ1 (538 aa).

The tract at residues 400–538 (PVIVNTPHLK…KTGNAVKGEL (139 aa)) is peptide-binding domain. Residues 464-484 (PIPKEENAEEDDESEWSDDEP) form a disordered region. Over residues 470 to 484 (NAEEDDESEWSDDEP) the composition is skewed to acidic residues. Phosphoserine is present on residues Ser-477 and Ser-480.

This sequence belongs to the heat shock protein 70 family. RAC is a heterodimer of the Hsp70/DnaK-type chaperone SSZ1 and the Hsp40/DnaJ-type chaperone ZUO1. RAC associates with ribosomes via ZUO1.

It is found in the cytoplasm. Component of the ribosome-associated complex (RAC), a heterodimeric chaperone complex involved in regulation of accurate translation termination and in folding or maintaining nascent polypeptides in a folding-competent state. RAC stimulates the ATPase activity of the ribosome-associated pool of Hsp70-type chaperones SSB1/SSB2 that bind to the nascent polypeptide chain. SSZ1 is required for ZUO1 to function efficiently as a J-protein for SSB1/SSB2. Also involved in pleiotropic drug resistance by post-translational activation of transcription factor PDR1. The chain is Ribosome-associated complex subunit SSZ1 (SSZ1) from Saccharomyces cerevisiae (strain ATCC 204508 / S288c) (Baker's yeast).